The chain runs to 344 residues: Fructose-1,6-bisphosphatase, cytosolic (344 aa).

Mg(2+)-binding residues include Glu-71, Glu-100, Asp-121, Leu-123, and Asp-124. Residues 124-127 (DGSS), Asn-215, Tyr-247, Tyr-267, and Lys-277 contribute to the substrate site. Glu-283 contributes to the Mg(2+) binding site.

It belongs to the FBPase class 1 family. It depends on Mg(2+) as a cofactor.

It localises to the cytoplasm. The catalysed reaction is beta-D-fructose 1,6-bisphosphate + H2O = beta-D-fructose 6-phosphate + phosphate. This chain is Fructose-1,6-bisphosphatase, cytosolic, found in Oryza coarctata (Wild rice).